Reading from the N-terminus, the 1405-residue chain is MEEKRYLKRKEKARSDGNRDQVAVSCNQLGDFYNQQGKYTDAVREYVQEAQIYASMGKELETAKAKRMVGEMYTLLCDYDAAKDHINDYLKIAKRLKNQVEEQRAYATLGRVHLLHGQSLADSSASGSMEQLKLAEKNFLRSLLLIKDLSGQISKLEQLDMQARCYLNIGVVKEHMEAFQESIEYIDKAIKISKTHELWDLTHLCYISMSLLYICKKNDATAALRFCNMALEVAKRFPNKVKKICETLITKAEILIKAGDFASAKQILTKAYKKNTPDENDRVNIEKQLRIVVKVCQTLDELVLTSSVDYAKLKGLYEKLGDGCCHLMNYEKALTYYQKMLENAELNQESGKSLVPIYVSLYQTYRDNGQFDKALEYLWKEFELNQDAPSEAFTTLCTIAEICEQQSHPFWTVHDVYQKALRQADKAGSCSDKLVKIAMVRLRRLMLKHNMQVLVENLEADATAKGIDLDQEESVGDDEEESDGGGTAVQQNTPDWDDDFDLATLTDSDASDLDETEKPRPQRTTRGNRTLVIKKNNKGETQLHQACISGNLELVRRLIDQGHTVNVRDHAGWLPLHEACNHGYREIVELLLDKGAASAINDKGGTSCDGITPLFDACSNGFLDVAELLLDRGADATVRTDYNETCIAGLDKWRQGAQLVDGEQAQYAQLRERLLRTLSKVGICSDKNARPLTNFNAKRISREERGSMSEEEDEEEALHESNRRSLSHNRSGSEYGAKKSKSSTQPSASKEYRSVMAHLKRPNRLNDDPPSTSTLNKHKRNAFLSEDEVDADNWLIDDVGPERKRKRINSGDLSRRTSKENFQDTALSLPANWEDDLLQATPENEYSQRQKQMRKLTLSRSSSMSSNHSSSATSSRKKHQATLLDSGFSRFRSESPLGSESSQDGTTSLISVRTIEPDSTTSTIQVLISPAKSSPIKVQATPVLATTVSFKVKIQDELLLVPIERKKLQDINIRWLAEEAGRRYNKLTGLTPLLRLKTADGFAYEETDPVSVALEQNMLMASILDWKISPLSQRYEEMCLQMQKTVDNKVKLLLERSQNNNMLELSGLWMRAEKTEPIFKALLHQARLTVLDLSCNFIGNEGCQQLAKSLPTLLQLKALRLQCNAIGSHGLEALLCGQGMDKLELLEELNLNQNPLGNASVRILSKYCASPAGQALTCLQLAQCELTELQDFDLGFNKLTRFDISFNQLTQQSVRRLTDQLNSCRLEQLNLSYVRWPLDDASGFALSERLVTLFEGGTCERFVGVQLAGCGLNDAHMYNISQHLAKAKQLQMLDISDNSNLSGTTLGYILDELPQLRDLLAVNCTNLLDDIRLQKLEQLKQLPRRLELTVDEQVFSMPGALETLQSIWQLQFGDKAKMLTTSNSRKIGRRYKGLLKLLADGSDAE.

7 TPR repeats span residues 23 to 56 (AVSC…YASM), 63 to 96 (AKAK…AKRL), 163 to 196 (ARCY…SKTH), 203 to 237 (HLCY…AKRF), 245 to 278 (CETL…NTPD), 314 to 347 (KGLY…AELN), and 355 to 388 (VPIY…NQDA). The stretch at 153 to 181 (ISKLEQLDMQARCYLNIGVVKEHMEAFQE) is one LRR 1 repeat. The LRR 2 repeat unit spans residues 439-465 (MVRLRRLMLKHNMQVLVENLEADATAK). Residues 465-535 (KGIDLDQEES…RGNRTLVIKK (71 aa)) form a disordered region. A compositionally biased stretch (acidic residues) spans 469–483 (LDQEESVGDDEEESD). 3 ANK repeats span residues 538-567 (KGET…TVNV), 571-600 (AGWL…ASAI), and 609-638 (DGIT…DATV). Disordered regions lie at residues 695 to 753 (FNAK…KEYR), 806 to 827 (KRIN…DTAL), and 841 to 880 (TPEN…KKHQ). 2 positions are modified to phosphoserine: Ser707 and Ser709. The span at 813–822 (LSRRTSKENF) shows a compositional bias: basic and acidic residues. A compositionally biased stretch (polar residues) spans 841 to 850 (TPENEYSQRQ). The span at 859–874 (SRSSSMSSNHSSSATS) shows a compositional bias: low complexity. Phosphoserine occurs at positions 893, 895, 899, and 902. LRR repeat units lie at residues 1085 to 1108 (QARL…QLAK), 1113 to 1137 (LLQL…LLCG), 1143 to 1166 (LELL…ILSK), 1186 to 1211 (LTEL…QLTQ), 1287 to 1311 (AKQL…YILD), and 1333 to 1357 (LQKL…VFSM).

This sequence belongs to the Tonsoku family.

The protein localises to the nucleus. It is found in the nucleoplasm. It localises to the chromosome. Its function is as follows. Histone reader involved in homologous recombination-mediated repair of double-strand breaks (DSBs) at stalled or collapsed replication forks. Specifically recognizes and binds histone H3.1. The polypeptide is Tonsoku-like protein (Drosophila melanogaster (Fruit fly)).